The primary structure comprises 98 residues: Cell division protein FtsB (98 aa).

The Cytoplasmic portion of the chain corresponds to 1 to 3 (MKR). Residues 4–21 (LLFVLIALLAMLQYRLWL) form a helical membrane-spanning segment. At 22–98 (GDKSLADSFH…GGERGGVPEN (77 aa)) the chain is on the periplasmic side. Residues 31–74 (HLQEQIKLQQQSNAQLVARNQVLREEISDLRSGTEALEERARNE) are a coiled coil.

It belongs to the FtsB family. Part of a complex composed of FtsB, FtsL and FtsQ.

The protein localises to the cell inner membrane. Functionally, essential cell division protein. May link together the upstream cell division proteins, which are predominantly cytoplasmic, with the downstream cell division proteins, which are predominantly periplasmic. The chain is Cell division protein FtsB from Shewanella pealeana (strain ATCC 700345 / ANG-SQ1).